The primary structure comprises 651 residues: Intraflagellar transport protein 70A (651 aa).

TPR repeat units follow at residues Asp-8–Ser-41, Arg-42–Val-75, Pro-140–Lys-173, Asp-175–Glu-207, Leu-372–Thr-405, Ile-410–His-443, and Ile-445–Asn-478. Positions Tyr-494–Asn-521 form a coiled coil. The stretch at Cys-530 to Lys-563 is one TPR 8 repeat.

It belongs to the TTC30/dfy-1/fleer family.

The protein resides in the cell projection. It is found in the cilium. Its function is as follows. Required for polyglutamylation of axonemal tubulin. Plays a role in anterograde intraflagellar transport (IFT), the process by which cilia precursors are transported from the base of the cilium to the site of their incorporation at the tip. This chain is Intraflagellar transport protein 70A (ift70a), found in Xenopus tropicalis (Western clawed frog).